A 340-amino-acid chain; its full sequence is Anthranilate phosphoribosyltransferase (340 aa).

5-phospho-alpha-D-ribose 1-diphosphate is bound by residues Gly-81, 84–85 (GD), Thr-89, 91–94 (NIST), 109–117 (KHGNRNLSS), and Ala-121. Gly-81 is an anthranilate binding site. Residue Ser-93 coordinates Mg(2+). Residue Asn-112 coordinates anthranilate. Arg-167 serves as a coordination point for anthranilate. The Mg(2+) site is built by Asp-226 and Glu-227.

Belongs to the anthranilate phosphoribosyltransferase family. As to quaternary structure, homodimer. The cofactor is Mg(2+).

The enzyme catalyses N-(5-phospho-beta-D-ribosyl)anthranilate + diphosphate = 5-phospho-alpha-D-ribose 1-diphosphate + anthranilate. It participates in amino-acid biosynthesis; L-tryptophan biosynthesis; L-tryptophan from chorismate: step 2/5. Its function is as follows. Catalyzes the transfer of the phosphoribosyl group of 5-phosphorylribose-1-pyrophosphate (PRPP) to anthranilate to yield N-(5'-phosphoribosyl)-anthranilate (PRA). In Ruegeria sp. (strain TM1040) (Silicibacter sp.), this protein is Anthranilate phosphoribosyltransferase.